The sequence spans 341 residues: Retinol dehydrogenase 10 (341 aa).

The helical; Signal-anchor transmembrane segment at 3 to 23 (IVVEFFVVTFKVLWAFVLAAA) threads the bilayer. 40–64 (LITGAGSGLGRLFALEFARRRALLV) provides a ligand contact to NADP(+). Ser197 contributes to the substrate binding site. The active-site Proton acceptor is Tyr210.

This sequence belongs to the short-chain dehydrogenases/reductases (SDR) family. As to expression, detected in retinal pigment epithelium (at protein level). Detected in retina, retinal pigment epithelium, and at lower levels in cornea, liver, kidney, pancreas, lung, brain and skeletal muscle.

The protein resides in the microsome membrane. The protein localises to the endoplasmic reticulum membrane. It catalyses the reaction all-trans-retinol + NADP(+) = all-trans-retinal + NADPH + H(+). It participates in cofactor metabolism; retinol metabolism. Functionally, retinol dehydrogenase with a clear preference for NADP. Converts all-trans-retinol to all-trans-retinal. Has no detectable activity towards 11-cis-retinol, 9-cis-retinol and 13-cis-retinol. This Bos taurus (Bovine) protein is Retinol dehydrogenase 10 (RDH10).